A 269-amino-acid polypeptide reads, in one-letter code: Phosphoribosylformylglycinamidine synthase subunit PurQ (269 aa).

One can recognise a Glutamine amidotransferase type-1 domain in the interval 5–262 (VLVMSGYGIN…IESNLQIFKN (258 aa)). The active-site Nucleophile is the cysteine 95. Catalysis depends on residues histidine 222, glutamate 224, and glutamate 232.

As to quaternary structure, part of the FGAM synthase complex composed of 1 PurL, 1 PurQ and 2 PurS subunits.

The protein localises to the cytoplasm. The enzyme catalyses N(2)-formyl-N(1)-(5-phospho-beta-D-ribosyl)glycinamide + L-glutamine + ATP + H2O = 2-formamido-N(1)-(5-O-phospho-beta-D-ribosyl)acetamidine + L-glutamate + ADP + phosphate + H(+). It catalyses the reaction L-glutamine + H2O = L-glutamate + NH4(+). It functions in the pathway purine metabolism; IMP biosynthesis via de novo pathway; 5-amino-1-(5-phospho-D-ribosyl)imidazole from N(2)-formyl-N(1)-(5-phospho-D-ribosyl)glycinamide: step 1/2. Its function is as follows. Part of the phosphoribosylformylglycinamidine synthase complex involved in the purines biosynthetic pathway. Catalyzes the ATP-dependent conversion of formylglycinamide ribonucleotide (FGAR) and glutamine to yield formylglycinamidine ribonucleotide (FGAM) and glutamate. The FGAM synthase complex is composed of three subunits. PurQ produces an ammonia molecule by converting glutamine to glutamate. PurL transfers the ammonia molecule to FGAR to form FGAM in an ATP-dependent manner. PurS interacts with PurQ and PurL and is thought to assist in the transfer of the ammonia molecule from PurQ to PurL. The protein is Phosphoribosylformylglycinamidine synthase subunit PurQ of Methanococcus maripaludis (strain C5 / ATCC BAA-1333).